The chain runs to 240 residues: MSRSLLTNETSELDLLDQRPFDQTDFDILKSYEAVVDGLAMLIGSHCEIVLHSLQDLKCSAIRIANGEHTGRKIGSPITDLALRMLHDMTGADSSVSKCYFTRAKSGVLMKSLTIAIRNREQRVIGLLCINMNLDVPFSQIMSTFVPPETPDVGSSVNFASSVEDLVTQTLEFTIEEVNADRNVSNNAKNRQIVLNLYEKGIFDIKDAINQVADRLNISKHTVYLYIRQFKSGDFQGQDK.

The protein to H.influenzae HI_0575.

This is an uncharacterized protein from Escherichia coli (strain K12).